The primary structure comprises 169 residues: Ureidoglycolate lyase (169 aa).

This sequence belongs to the ureidoglycolate lyase family. Homodimer. It depends on Ni(2+) as a cofactor.

The catalysed reaction is (S)-ureidoglycolate = urea + glyoxylate. It participates in nitrogen metabolism; (S)-allantoin degradation. Functionally, catalyzes the catabolism of the allantoin degradation intermediate (S)-ureidoglycolate, generating urea and glyoxylate. Involved in the utilization of allantoin as nitrogen source. The chain is Ureidoglycolate lyase from Brucella anthropi (strain ATCC 49188 / DSM 6882 / CCUG 24695 / JCM 21032 / LMG 3331 / NBRC 15819 / NCTC 12168 / Alc 37) (Ochrobactrum anthropi).